Here is a 791-residue protein sequence, read N- to C-terminus: Ataxin-2 homolog (791 aa).

The span at 1 to 22 (MATRSVSMKQTSQRAASPNKTQ) shows a compositional bias: polar residues. Disordered regions lie at residues 1–28 (MATR…KKWS), 60–100 (RGGV…QQRV), 112–134 (RTET…GVPL), 235–311 (TRSN…KEGQ), 326–423 (SLDS…TKLG), 452–505 (KPAP…PVSS), 613–634 (NPSQ…GNSS), and 707–791 (PMYG…EAKP). Residues 76-96 (SLASSEENVSSVSGSAKSNNS) are compositionally biased toward low complexity. Basic and acidic residues-rich tracts occupy residues 112 to 125 (RTET…RWMP) and 243 to 256 (NNKD…EAPH). The segment covering 326 to 337 (SLDSKQPSSTKS) has biased composition (polar residues). Basic and acidic residues-rich tracts occupy residues 360–371 (DSKEPRKEEAEK) and 395–418 (SKEE…KETT). Over residues 473–486 (SIPSTTPQSPSVVS) the composition is skewed to low complexity. Residues 487–497 (NGENKPSSSPV) are compositionally biased toward polar residues. 2 stretches are compositionally biased toward low complexity: residues 715-725 (SNSQRSFNSSN) and 734-760 (NNNA…NTTA). Positions 774 to 791 (DATEKTEKDASANQEAKP) are enriched in basic and acidic residues.

It belongs to the ataxin-2 family. In terms of assembly, interacts with mkt1.

The protein localises to the cytoplasm. Its function is as follows. Involved in post-transcriptional regulation of gene expression, probably by association with mkt1. The sequence is that of Ataxin-2 homolog from Schizosaccharomyces pombe (strain 972 / ATCC 24843) (Fission yeast).